The chain runs to 210 residues: Probable transcriptional regulator ycf29 (210 aa).

In terms of domain architecture, Response regulatory spans 3–119 (NILILDTDIG…ELVVIIEGVL (117 aa)). Asp-52 bears the 4-aspartylphosphate mark. Positions 142-207 (SNNLKINFTP…ELVKYALENN (66 aa)) constitute an HTH luxR-type domain.

It is found in the plastid. It localises to the cyanelle. This chain is Probable transcriptional regulator ycf29 (ycf29), found in Cyanophora paradoxa.